The primary structure comprises 82 residues: Small ribosomal subunit protein uS17 (82 aa).

It belongs to the universal ribosomal protein uS17 family. In terms of assembly, part of the 30S ribosomal subunit.

One of the primary rRNA binding proteins, it binds specifically to the 5'-end of 16S ribosomal RNA. In Rhodopseudomonas palustris (strain BisA53), this protein is Small ribosomal subunit protein uS17.